The primary structure comprises 252 residues: Major prion protein (252 aa).

The signal sequence occupies residues 1–28 (MAHLGYWMLLLFVATWSDVGLCKKRPKP). The tract at residues 23–229 (KKRPKPGGGW…ESQAAYQRAA (207 aa)) is interaction with GRB2, ERI3 and SYN1. The tract at residues 26 to 109 (PKPGGGWNTG…KPSKPKTSMK (84 aa)) is disordered. A run of 5 repeats spans residues 51-59 (PPQGGGWGQ), 60-67 (PHGGGWGQ), 68-75 (PHGGGWGQ), 76-83 (PHGGGWGQ), and 84-92 (PHGGGWGQG). Residues 51–92 (PPQGGGWGQPHGGGWGQPHGGGWGQPHGGGWGQPHGGGWGQG) are 5 X 8 AA tandem repeats of P-H-G-G-G-W-G-Q. A compositionally biased stretch (gly residues) spans 53-93 (QGGGWGQPHGGGWGQPHGGGWGQPHGGGWGQPHGGGWGQGG). Residues H61, G62, G63, H69, G70, G71, H77, G78, G79, H85, G86, and G87 each coordinate Cu(2+). An intrachain disulfide couples C178 to C213. N-linked (GlcNAc...) asparagine glycosylation is found at N180 and N196. Residue A229 is the site of GPI-anchor amidated alanine attachment. The propeptide at 230-252 (GVLLFSSPPVILLISFLIFLIVG) is removed in mature form.

Belongs to the prion family. As to quaternary structure, monomer and homodimer. Has a tendency to aggregate into amyloid fibrils containing a cross-beta spine, formed by a steric zipper of superposed beta-strands. Soluble oligomers may represent an intermediate stage on the path to fibril formation. Copper binding may promote oligomerization. Interacts with GRB2, APP, ERI3/PRNPIP and SYN1. Mislocalized cytosolically exposed PrP interacts with MGRN1; this interaction alters MGRN1 subcellular location and causes lysosomal enlargement. Interacts with KIAA1191.

It is found in the cell membrane. It localises to the golgi apparatus. Its function is as follows. Its primary physiological function is unclear. Has cytoprotective activity against internal or environmental stresses. May play a role in neuronal development and synaptic plasticity. May be required for neuronal myelin sheath maintenance. May play a role in iron uptake and iron homeostasis. Soluble oligomers are toxic to cultured neuroblastoma cells and induce apoptosis (in vitro). Association with GPC1 (via its heparan sulfate chains) targets PRNP to lipid rafts. Also provides Cu(2+) or Zn(2+) for the ascorbate-mediated GPC1 deaminase degradation of its heparan sulfate side chains. In Oryctolagus cuniculus (Rabbit), this protein is Major prion protein (PRNP).